The chain runs to 306 residues: Ribonuclease Z (306 aa).

The Zn(2+) site is built by histidine 63, histidine 65, aspartate 67, histidine 68, histidine 141, aspartate 211, and histidine 269. Aspartate 67 acts as the Proton acceptor in catalysis.

Belongs to the RNase Z family. As to quaternary structure, homodimer. Requires Zn(2+) as cofactor.

The enzyme catalyses Endonucleolytic cleavage of RNA, removing extra 3' nucleotides from tRNA precursor, generating 3' termini of tRNAs. A 3'-hydroxy group is left at the tRNA terminus and a 5'-phosphoryl group is left at the trailer molecule.. In terms of biological role, zinc phosphodiesterase, which displays some tRNA 3'-processing endonuclease activity. Probably involved in tRNA maturation, by removing a 3'-trailer from precursor tRNA. This Staphylococcus aureus (strain USA300) protein is Ribonuclease Z.